Reading from the N-terminus, the 478-residue chain is Aspartyl/glutamyl-tRNA(Asn/Gln) amidotransferase subunit B 2 (478 aa).

The protein belongs to the GatB/GatE family. GatB subfamily. In terms of assembly, heterotrimer of A, B and C subunits.

It carries out the reaction L-glutamyl-tRNA(Gln) + L-glutamine + ATP + H2O = L-glutaminyl-tRNA(Gln) + L-glutamate + ADP + phosphate + H(+). It catalyses the reaction L-aspartyl-tRNA(Asn) + L-glutamine + ATP + H2O = L-asparaginyl-tRNA(Asn) + L-glutamate + ADP + phosphate + 2 H(+). Its function is as follows. Allows the formation of correctly charged Asn-tRNA(Asn) or Gln-tRNA(Gln) through the transamidation of misacylated Asp-tRNA(Asn) or Glu-tRNA(Gln) in organisms which lack either or both of asparaginyl-tRNA or glutaminyl-tRNA synthetases. The reaction takes place in the presence of glutamine and ATP through an activated phospho-Asp-tRNA(Asn) or phospho-Glu-tRNA(Gln). In Clostridium acetobutylicum (strain ATCC 824 / DSM 792 / JCM 1419 / IAM 19013 / LMG 5710 / NBRC 13948 / NRRL B-527 / VKM B-1787 / 2291 / W), this protein is Aspartyl/glutamyl-tRNA(Asn/Gln) amidotransferase subunit B 2 (gatB2).